The following is a 53-amino-acid chain: UPF0391 membrane protein gsr2640 (53 aa).

A run of 2 helical transmembrane segments spans residues 4–24 and 32–49; these read LLWLVVVLMVIAALLGFGGVV and WFLIVAAVVLAVVGFVTG.

This sequence belongs to the UPF0391 family.

It is found in the cell membrane. The polypeptide is UPF0391 membrane protein gsr2640 (Gloeobacter violaceus (strain ATCC 29082 / PCC 7421)).